Reading from the N-terminus, the 558-residue chain is Alpha-1,3-mannosyltransferase MNT2 (558 aa).

At 1 to 6 (MRRKNR) the chain is on the cytoplasmic side. The chain crosses the membrane as a helical; Signal-anchor for type II membrane protein span at residues 7 to 27 (LFILVVLLGIVLVVYYSQLNS). Residues 28–558 (LDLVEPVQSS…QIVDIWNKDI (531 aa)) are Lumenal-facing. N-linked (GlcNAc...) asparagine glycosylation is present at Asn-187.

This sequence belongs to the MNN1/MNT family.

It is found in the golgi apparatus membrane. Its pathway is protein modification; protein glycosylation. In terms of biological role, mannosyltransferase involved in adding the 4th and 5th mannose residues of O-linked glycans. This Saccharomyces cerevisiae (strain ATCC 204508 / S288c) (Baker's yeast) protein is Alpha-1,3-mannosyltransferase MNT2 (MNT2).